The sequence spans 223 residues: N-terminal Xaa-Pro-Lys N-methyltransferase 1-B (223 aa).

S-adenosyl-L-methionine contacts are provided by residues glycine 69, arginine 74, 91-93 (DVT), 119-120 (LQ), and glutamine 135.

This sequence belongs to the methyltransferase superfamily. NTM1 family.

The protein localises to the nucleus. It carries out the reaction N-terminal L-alanyl-L-prolyl-L-lysyl-[protein] + 3 S-adenosyl-L-methionine = N-terminal N,N,N-trimethyl-L-alanyl-L-prolyl-L-lysyl-[protein] + 3 S-adenosyl-L-homocysteine + 3 H(+). The catalysed reaction is N-terminal L-seryl-L-prolyl-L-lysyl-[protein] + 3 S-adenosyl-L-methionine = N-terminal N,N,N-trimethyl-L-seryl-L-prolyl-L-lysyl-[protein] + 3 S-adenosyl-L-homocysteine + 3 H(+). The enzyme catalyses N-terminal L-prolyl-L-prolyl-L-lysyl-[protein] + 2 S-adenosyl-L-methionine = N-terminal N,N-dimethyl-L-prolyl-L-prolyl-L-lysyl-[protein] + 2 S-adenosyl-L-homocysteine + 2 H(+). In terms of biological role, distributive alpha-N-methyltransferase that methylates the N-terminus of target proteins containing the N-terminal motif [Ala/Gly/Pro/Ser]-Pro-Lys when the initiator Met is cleaved. Specifically catalyzes mono-, di- or tri-methylation of the exposed alpha-amino group of the Ala, Gly or Ser residue in the [Ala/Gly/Ser]-Pro-Lys motif and mono- or di-methylation of Pro in the Pro-Pro-Lys motif. Required during mitosis for normal bipolar spindle formation and chromosome segregation via its action on target proteins. The polypeptide is N-terminal Xaa-Pro-Lys N-methyltransferase 1-B (ntmt1-b) (Xenopus laevis (African clawed frog)).